Here is a 221-residue protein sequence, read N- to C-terminus: uncharacterized protein (221 aa).

A disordered region spans residues Met1–Arg22. Positions Thr7–Ala16 are enriched in polar residues.

It belongs to the IIV-6 259R family.

This is an uncharacterized protein from Invertebrate iridescent virus 3 (IIV-3).